Consider the following 204-residue polypeptide: Terpene cyclase trt1 (204 aa).

Helical transmembrane passes span Phe-44–Ala-64, His-67–Ala-87, Phe-103–Leu-122, Phe-132–Arg-154, and Trp-169–Phe-189.

It belongs to the paxB family.

It is found in the membrane. Its pathway is secondary metabolite biosynthesis; terpenoid biosynthesis. Functionally, terpene cyclase; part of the gene cluster that mediates the biosynthesis of terretonin, a fungal meroterpenoid that acts as a mycotoxin. The first step of the pathway is the synthesis of 3,5-dimethylorsellinic acid (DMOA) by the polyketide synthase trt4. DMOA is then prenylated into farnesyl-DMOA by the polyprenyl transferase trt2. Methylation by the methyltransferase trt5 then leads to farnesyl-DMOA methyl ester which is further subject to epoxidation by the FAD-dependent monooxygenase trt8 to yield epoxyfarnesyl-DMOA methyl ester. Cyclization of epoxyfarnesyl-DMOA methyl ester by the terpene cyclase trt1 leads to a tetracycle intermediate which is in turn converted to preterretonin. Dehydrogenase trt9 comes next to transform preterretonin to preterrenoid. The FAD-dependent monooxygenase trt3 is then required for the C-hydroxylation at C16 of preterrenoid to yield terrenoid. The cytochrome P450 trt6 catalyzes three successive oxidations to transform terrenoid into an unstable intermediate, which then undergoes the D-ring expansion and unusual rearrangement of the methoxy group to afford the core skeleton of terretonin. Trt14 catalyzes the D-ring expansion of terretonin involving intramolecular methoxy rearrangement as well as the hydrolysis of the expanded D-ring and the methyl ester moiety. Finally, the nonheme iron-dependent dioxygenase trt7 accomplishes the last two oxidation reactions steps to complete the biosynthesis of terretonin. Terretonin C is produced via spontaneous decarboxylation of the terretonin precursor. Another shunt product of the terretonin biosynthesis is dihydrofarnesyl-DMOA, derived from epoxyfarnesyl-DMOA through hydrolysis of the epoxide. The polypeptide is Terpene cyclase trt1 (Aspergillus terreus (strain NIH 2624 / FGSC A1156)).